Here is a 217-residue protein sequence, read N- to C-terminus: Probable transaldolase (217 aa).

The Schiff-base intermediate with substrate role is filled by K83.

It belongs to the transaldolase family. Type 3B subfamily.

The protein resides in the cytoplasm. It carries out the reaction D-sedoheptulose 7-phosphate + D-glyceraldehyde 3-phosphate = D-erythrose 4-phosphate + beta-D-fructose 6-phosphate. It participates in carbohydrate degradation; pentose phosphate pathway; D-glyceraldehyde 3-phosphate and beta-D-fructose 6-phosphate from D-ribose 5-phosphate and D-xylulose 5-phosphate (non-oxidative stage): step 2/3. Transaldolase is important for the balance of metabolites in the pentose-phosphate pathway. This chain is Probable transaldolase (tal), found in Methanocaldococcus jannaschii (strain ATCC 43067 / DSM 2661 / JAL-1 / JCM 10045 / NBRC 100440) (Methanococcus jannaschii).